The chain runs to 1259 residues: Lysine-specific demethylase 2B (1259 aa).

The JmjC domain occupies 147 to 315; it reads FSHTKLERVV…MQLRVFEIED (169 aa). Threonine 208 provides a ligand contact to substrate. Residues histidine 211 and aspartate 213 each contribute to the Fe cation site. Lysine 228 provides a ligand contact to substrate. Histidine 283 serves as a coordination point for Fe cation. Basic and acidic residues predominate over residues 388 to 402; it reads EEKGNLVEKPSKQSG. 2 disordered regions span residues 388–463 and 536–562; these read EEKG…ATDM and KPSK…SANR. Over residues 403 to 413 the composition is skewed to polar residues; the sequence is DESSTTNSTHS. The span at 414–423 shows a compositional bias: basic and acidic residues; it reads NGKDAAEKKQ. Residues 426–437 are compositionally biased toward polar residues; sequence TLMQQLKRTLSN. Over residues 536-548 the composition is skewed to basic residues; the sequence is KPSKNRAVGRPKG. The segment at 567 to 613 adopts a CXXC-type zinc-finger fold; that stretch reads ARRRRTRCRKCEACLRTECGECHFCKDMKKFGGPGRMKQSCIMRQCI. Positions 574, 577, 580, 585, 588, 591, 607, 612, 623, 626, 649, 652, 657, 660, 680, and 683 each coordinate Zn(2+). The PHD-type zinc finger occupies 620-686; sequence TAVCLVCGEA…CWECPKCNHA (67 aa). Basic and acidic residues-rich tracts occupy residues 729–763 and 771–790; these read KKKV…EDGH and EKPP…EEKL. Positions 729-958 are disordered; sequence KKKVEREETP…PPPSLSPPKC (230 aa). The segment covering 835 to 848 has biased composition (polar residues); that stretch reads SRSSSPTAGPSTEG. Residues 854–863 show a composition bias toward basic residues; it reads KKKIRRKRRV. The span at 864 to 877 shows a compositional bias: basic and acidic residues; that stretch reads SNKELSKELSKELN. The stretch at 864–891 forms a coiled coil; sequence SNKELSKELSKELNQEIQKTESSLASEN. Positions 878 to 889 are enriched in polar residues; sequence QEIQKTESSLAS. Over residues 890 to 908 the composition is skewed to basic and acidic residues; that stretch reads ENHHPIKSEPESDNEESKK. Residues 985–1030 enclose the F-box domain; the sequence is AHVMQREVWMAIFSYLSHRDLCICMRICRTWNRWCCDKRLWTQIDL. LRR repeat units follow at residues 1056-1081, 1082-1105, 1145-1170, 1171-1200, and 1201-1225; these read WTNI…NLSG, CSWI…NVQW, GLDI…DLSY, CNHV…NLSD, and CNNV…DLRF.

This sequence belongs to the JHDM1 histone demethylase family. It depends on Fe(2+) as a cofactor.

It is found in the nucleus. It localises to the nucleolus. Its subcellular location is the chromosome. It catalyses the reaction N(6),N(6)-dimethyl-L-lysyl(36)-[histone H3] + 2 2-oxoglutarate + 2 O2 = L-lysyl(36)-[histone H3] + 2 formaldehyde + 2 succinate + 2 CO2. Histone demethylase activity is inhibited by fumarate. In terms of biological role, histone demethylase that demethylates 'Lys-4' and 'Lys-36' of histone H3, thereby playing a central role in histone code. Preferentially demethylates trimethylated H3 'Lys-4' and dimethylated H3 'Lys-36' residue while it has weak or no activity for mono- and tri-methylated H3 'Lys-36'. Preferentially binds the transcribed region of ribosomal RNA and represses the transcription of ribosomal RNA genes which inhibits cell growth and proliferation. The sequence is that of Lysine-specific demethylase 2B (kdm2b) from Xenopus laevis (African clawed frog).